The primary structure comprises 164 residues: Cyanate hydratase (164 aa).

Residues Arg-90, Glu-93, and Ser-116 contribute to the active site.

The protein belongs to the cyanase family.

The enzyme catalyses cyanate + hydrogencarbonate + 3 H(+) = NH4(+) + 2 CO2. Its function is as follows. Catalyzes the reaction of cyanate with bicarbonate to produce ammonia and carbon dioxide. This chain is Cyanate hydratase, found in Vitis vinifera (Grape).